A 702-amino-acid polypeptide reads, in one-letter code: ATP-dependent zinc metalloprotease FtsH (702 aa).

At 1–26 the chain is on the cytoplasmic side; it reads MKKRNKGLVEQTTTEKNNFSRKTAWK. The chain crosses the membrane as a helical span at residues 27–47; sequence VFWWVIILAVVIGVLAYIFSP. Over 48–175 the chain is Extracellular; sequence RAATAVVESW…FIAPDTRARD (128 aa). Residues 176–196 traverse the membrane as a helical segment; the sequence is VLNGLFGLLPIIIFVVFFLLF. The Cytoplasmic portion of the chain corresponds to 197-702; sequence WRSARGISAG…EVKPESETNS (506 aa). 271–278 provides a ligand contact to ATP; it reads GPPGTGKT. His493 provides a ligand contact to Zn(2+). Glu494 is a catalytic residue. The Zn(2+) site is built by His497 and Asp572. Residues 682–702 are disordered; that stretch reads EQQAKQKLNKSEVKPESETNS. Residues 690-702 show a composition bias toward basic and acidic residues; that stretch reads NKSEVKPESETNS.

It in the central section; belongs to the AAA ATPase family. The protein in the C-terminal section; belongs to the peptidase M41 family. Homohexamer. Zn(2+) is required as a cofactor.

It localises to the cell membrane. Its function is as follows. Acts as a processive, ATP-dependent zinc metallopeptidase for both cytoplasmic and membrane proteins. Plays a role in the quality control of integral membrane proteins. The chain is ATP-dependent zinc metalloprotease FtsH from Mycoplasma genitalium (strain ATCC 33530 / DSM 19775 / NCTC 10195 / G37) (Mycoplasmoides genitalium).